Reading from the N-terminus, the 318-residue chain is Ribosomal RNA small subunit methyltransferase H (318 aa).

S-adenosyl-L-methionine-binding positions include 37–39, Asp-57, Phe-83, Asp-104, and Gln-111; that span reads GGH.

This sequence belongs to the methyltransferase superfamily. RsmH family.

It localises to the cytoplasm. The enzyme catalyses cytidine(1402) in 16S rRNA + S-adenosyl-L-methionine = N(4)-methylcytidine(1402) in 16S rRNA + S-adenosyl-L-homocysteine + H(+). Functionally, specifically methylates the N4 position of cytidine in position 1402 (C1402) of 16S rRNA. The protein is Ribosomal RNA small subunit methyltransferase H of Neisseria gonorrhoeae (strain ATCC 700825 / FA 1090).